The following is a 148-amino-acid chain: MVRFLLLNGPNLNRLGMREPHIYGHTTLAQLEKQLTEFASEYAVELTCYQSNYEGALIDQIHRAESLYDGIIFNPGAFTHYSYALRDAIASIQTPVIEVHISNIHAREPFRHQSVLAPVTAGQIVGLGVNGYRLAILALLDMVEGKGK.

The active-site Proton acceptor is Y23. Positions 74, 80, and 87 each coordinate substrate. H100 functions as the Proton donor in the catalytic mechanism. Substrate-binding positions include 101 to 102 (IS) and R111.

The protein belongs to the type-II 3-dehydroquinase family. In terms of assembly, homododecamer.

It carries out the reaction 3-dehydroquinate = 3-dehydroshikimate + H2O. Its pathway is metabolic intermediate biosynthesis; chorismate biosynthesis; chorismate from D-erythrose 4-phosphate and phosphoenolpyruvate: step 3/7. Its function is as follows. Catalyzes a trans-dehydration via an enolate intermediate. This Anoxybacillus flavithermus (strain DSM 21510 / WK1) protein is 3-dehydroquinate dehydratase.